The following is a 259-amino-acid chain: Sesquipedalian-2 (259 aa).

The PH domain occupies 17-121; that stretch reads PADHMGFLRT…WVKVLSRASF (105 aa). A coiled-coil region spans residues 124–149; sequence MRLVVRELESQLQDARQSLALQRRSS. A F&amp;H motif is present at residues 223–235; sequence CFSTLHDWYGQEI.

Belongs to the sesquipedalian family. In terms of assembly, forms homodimers and heterodimers with PHETA1. Interacts with OCRL and INPP5B.

The protein resides in the early endosome. Its subcellular location is the recycling endosome. It is found in the golgi apparatus. It localises to the trans-Golgi network. The protein localises to the cytoplasmic vesicle. The protein resides in the clathrin-coated vesicle. Plays a role in endocytic trafficking. Required for receptor recycling from endosomes, both to the trans-Golgi network and the plasma membrane. In Homo sapiens (Human), this protein is Sesquipedalian-2.